The following is a 237-amino-acid chain: uncharacterized protein (237 aa).

Residues glutamate 91, glutamate 93, and aspartate 122 each contribute to the a divalent metal cation site.

The protein belongs to the FAH family.

This is an uncharacterized protein from Methanocaldococcus jannaschii (strain ATCC 43067 / DSM 2661 / JAL-1 / JCM 10045 / NBRC 100440) (Methanococcus jannaschii).